A 144-amino-acid chain; its full sequence is Snake venom vascular endothelial growth factor toxin VR-1 (144 aa).

Residues 1-24 form the signal peptide; that stretch reads MAAYLLAVAILFCIQGWPSGTVQG. Gln25 carries the post-translational modification Pyrrolidone carboxylic acid. 3 cysteine pairs are disulfide-bonded: Cys38–Cys80, Cys69–Cys115, and Cys73–Cys117. A compositionally biased stretch (basic and acidic residues) spans 120-134; it reads RWKQGEPEGPKEPRR. The interval 120–144 is disordered; the sequence is RWKQGEPEGPKEPRRGGVRAKFPFD. Positions 134 to 144 are excised as a propeptide; it reads RGGVRAKFPFD.

Belongs to the PDGF/VEGF growth factor family. Snake venom VEGF subfamily. As to quaternary structure, homodimer; disulfide-linked. Interacts with VEGF receptor-2 (KDR) with high affinity, but not with VEGF receptor-1 (Flt-1), VEGF receptor-3 (FLT4), and neuropilin-1 (NRP1). Expressed by the venom gland.

The protein resides in the secreted. Snake venom VEGFs may contribute to venom dispersion and prey subjugation by inducing vascular permeability and hypotension. This protein induces angiogenesis probably through VEGF receptor (KDR/VEGFR-2) signaling, as well as drastic hypotension. The hypotension is mediated by nitric oxide, which is produced by VEGF-activated endothelium NO synthase. May also induce vascular permeability. The sequence is that of Snake venom vascular endothelial growth factor toxin VR-1 from Daboia russelii (Russel's viper).